Here is a 95-residue protein sequence, read N- to C-terminus: Protein TusB (95 aa).

It belongs to the DsrH/TusB family. In terms of assembly, heterohexamer, formed by a dimer of trimers. The hexameric TusBCD complex contains 2 copies each of TusB, TusC and TusD. The TusBCD complex interacts with TusE.

Its subcellular location is the cytoplasm. Part of a sulfur-relay system required for 2-thiolation of 5-methylaminomethyl-2-thiouridine (mnm(5)s(2)U) at tRNA wobble positions. This chain is Protein TusB, found in Klebsiella pneumoniae (strain 342).